Reading from the N-terminus, the 426-residue chain is Serine--tRNA ligase (426 aa).

Positions 1-15 are enriched in basic and acidic residues; the sequence is MIDVKDLSENPDKFR. The tract at residues 1–20 is disordered; it reads MIDVKDLSENPDKFRASQRA. L-serine is bound at residue 228 to 230; it reads TSE. ATP contacts are provided by residues 259–261 and valine 275; that span reads RRE. Glutamate 282 is an L-serine binding site. 346 to 349 is a binding site for ATP; that stretch reads ELTS. Threonine 386 is an L-serine binding site.

This sequence belongs to the class-II aminoacyl-tRNA synthetase family. Type-1 seryl-tRNA synthetase subfamily. Homodimer. The tRNA molecule binds across the dimer.

It localises to the cytoplasm. It catalyses the reaction tRNA(Ser) + L-serine + ATP = L-seryl-tRNA(Ser) + AMP + diphosphate + H(+). The catalysed reaction is tRNA(Sec) + L-serine + ATP = L-seryl-tRNA(Sec) + AMP + diphosphate + H(+). It functions in the pathway aminoacyl-tRNA biosynthesis; selenocysteinyl-tRNA(Sec) biosynthesis; L-seryl-tRNA(Sec) from L-serine and tRNA(Sec): step 1/1. Functionally, catalyzes the attachment of serine to tRNA(Ser). Is also able to aminoacylate tRNA(Sec) with serine, to form the misacylated tRNA L-seryl-tRNA(Sec), which will be further converted into selenocysteinyl-tRNA(Sec). This is Serine--tRNA ligase from Paenarthrobacter aurescens (strain TC1).